The primary structure comprises 208 residues: Large ribosomal subunit protein uL4 (208 aa).

The tract at residues 58–77 (RGGGRKPWRQKGTGRARQGS) is disordered. The segment covering 60 to 71 (GGRKPWRQKGTG) has biased composition (basic residues).

This sequence belongs to the universal ribosomal protein uL4 family. In terms of assembly, part of the 50S ribosomal subunit.

Functionally, one of the primary rRNA binding proteins, this protein initially binds near the 5'-end of the 23S rRNA. It is important during the early stages of 50S assembly. It makes multiple contacts with different domains of the 23S rRNA in the assembled 50S subunit and ribosome. In terms of biological role, forms part of the polypeptide exit tunnel. This is Large ribosomal subunit protein uL4 from Caldicellulosiruptor saccharolyticus (strain ATCC 43494 / DSM 8903 / Tp8T 6331).